Reading from the N-terminus, the 254-residue chain is Pyridoxine 5'-phosphate synthase (254 aa).

3-amino-2-oxopropyl phosphate is bound at residue Asn12. Residue 14 to 15 coordinates 1-deoxy-D-xylulose 5-phosphate; that stretch reads DH. Residue Arg23 participates in 3-amino-2-oxopropyl phosphate binding. His48 acts as the Proton acceptor in catalysis. 1-deoxy-D-xylulose 5-phosphate-binding residues include Arg50 and His55. The active-site Proton acceptor is Glu75. Thr105 contacts 1-deoxy-D-xylulose 5-phosphate. His199 (proton donor) is an active-site residue. Residues Gly200 and 221–222 each bind 3-amino-2-oxopropyl phosphate; that span reads GF.

Belongs to the PNP synthase family. As to quaternary structure, homooctamer; tetramer of dimers.

The protein localises to the cytoplasm. The enzyme catalyses 3-amino-2-oxopropyl phosphate + 1-deoxy-D-xylulose 5-phosphate = pyridoxine 5'-phosphate + phosphate + 2 H2O + H(+). It participates in cofactor biosynthesis; pyridoxine 5'-phosphate biosynthesis; pyridoxine 5'-phosphate from D-erythrose 4-phosphate: step 5/5. Catalyzes the complicated ring closure reaction between the two acyclic compounds 1-deoxy-D-xylulose-5-phosphate (DXP) and 3-amino-2-oxopropyl phosphate (1-amino-acetone-3-phosphate or AAP) to form pyridoxine 5'-phosphate (PNP) and inorganic phosphate. In Rhodopseudomonas palustris (strain ATCC BAA-98 / CGA009), this protein is Pyridoxine 5'-phosphate synthase.